The primary structure comprises 294 residues: 4-diphosphocytidyl-2-C-methyl-D-erythritol kinase (294 aa).

Residue K11 is part of the active site. Residue 93–103 (PFGAGLGGGSS) coordinates ATP. The active site involves D135.

This sequence belongs to the GHMP kinase family. IspE subfamily.

The enzyme catalyses 4-CDP-2-C-methyl-D-erythritol + ATP = 4-CDP-2-C-methyl-D-erythritol 2-phosphate + ADP + H(+). It functions in the pathway isoprenoid biosynthesis; isopentenyl diphosphate biosynthesis via DXP pathway; isopentenyl diphosphate from 1-deoxy-D-xylulose 5-phosphate: step 3/6. Its function is as follows. Catalyzes the phosphorylation of the position 2 hydroxy group of 4-diphosphocytidyl-2C-methyl-D-erythritol. In Chlorobium phaeobacteroides (strain DSM 266 / SMG 266 / 2430), this protein is 4-diphosphocytidyl-2-C-methyl-D-erythritol kinase.